The following is a 285-amino-acid chain: Bark agglutinin I polypeptide A (285 aa).

The first 31 residues, 1 to 31 (MTSYNFKTQTSFPLLLSISFFFLLLLNKVNS), serve as a signal peptide directing secretion. Asn147 is a glycosylation site (N-linked (GlcNAc...) asparagine). Residues Glu156 and Asp158 each coordinate Mn(2+). Positions 158, 160, 162, and 166 each coordinate Ca(2+). Residues Asp166 and His171 each coordinate Mn(2+). An N-linked (GlcNAc...) asparagine glycan is attached at Asn188.

This sequence belongs to the leguminous lectin family. In terms of assembly, RPbAI is composed of two polypeptides, A and B, that associate into five different tetrameric isolectins. The A4 combination is the only one devoid of agglutination activity. Isoform B4 displays maximal agglutination activity. As to expression, strong expression in seed. Lower levels in the flower, and the bark of the roots. No expression in leaf. The lectin accumulates in the inner bark in autumn.

Functionally, N-acetyl-D-galactosamine specific lectin. Bark lectins are storage protein that probably maintains stocks of nitrogen during dormant period. Self-aggregatable molecules that can bind their own carbohydrate side chains. They could also play a role in the plant's defense against phytophagous invertebrates or herbivorous higher animals. The chain is Bark agglutinin I polypeptide A from Robinia pseudoacacia (Black locust).